We begin with the raw amino-acid sequence, 348 residues long: Dihydroorotase (348 aa).

Zn(2+)-binding residues include His17 and His19. Substrate is bound by residues 19 to 21 (HLR) and Asn45. Residues Lys103, His140, and His178 each coordinate Zn(2+). Position 103 is an N6-carboxylysine (Lys103). His140 serves as a coordination point for substrate. Leu223 lines the substrate pocket. Asp251 serves as a coordination point for Zn(2+). Residue Asp251 is part of the active site. His255 and Ala267 together coordinate substrate.

It belongs to the metallo-dependent hydrolases superfamily. DHOase family. Class II DHOase subfamily. Homodimer. Zn(2+) is required as a cofactor.

The enzyme catalyses (S)-dihydroorotate + H2O = N-carbamoyl-L-aspartate + H(+). It functions in the pathway pyrimidine metabolism; UMP biosynthesis via de novo pathway; (S)-dihydroorotate from bicarbonate: step 3/3. Its function is as follows. Catalyzes the reversible cyclization of carbamoyl aspartate to dihydroorotate. This chain is Dihydroorotase, found in Shigella flexneri.